Consider the following 750-residue polypeptide: Circadian input-output histidine kinase CikA (750 aa).

The N-terminal domain stretch occupies residues 1–173 (MLPAFSPIFR…QVIAQIRQSL (173 aa)). The segment at 174–333 (DLSEILNNAV…KNFLGQIGEH (160 aa)) is GAF domain. Positions 385 to 609 (NISHELRTPL…IFTTVIPQQN (225 aa)) constitute a Histidine kinase domain. His-388 is subject to Phosphohistidine; by autocatalysis. Residues 604–750 (VIPQQNFPPT…VQSIQQEPLR (147 aa)) form a psR domain, bind KaiB(fs) region. A Response regulatory domain is found at 631–745 (SVIVIEQDEE…LLLQRVQSIQ (115 aa)). Asp-680 carries the 4-aspartylphosphate modification.

It in the N-terminal section; belongs to the phytochrome family. As to quaternary structure, homodimer. Part of the circadian clock (KaiA, KaiB, KaiC, CikA, RpaA, SasA), the composition of which varies during the circadian cycle. KaiA and CikA compete for binding to KaiB(fs). Interacts with RpaA.

It carries out the reaction ATP + protein L-histidine = ADP + protein N-phospho-L-histidine.. Its function is as follows. Functions in an input pathway to the Kai circadian clock. Senses oxidized quinones via its C-terminal pseudo-receiver domain, providing a link between cell metabolism and the clock. Affects the ratio of phosphorylated to unphosphorylated KaiC, binds quinones via its pseudo-receptor domain. Quinone-binding destabilizes the protein rapidly. Autophosphorylates, does not transfer the phosphate to its pseudo-receiver (PsR) domain. May play a role in cell division. In terms of biological role, also functions in a two-component CikA/RpaA output pathway from the circadian clock, negatively regulating kaiBC expression independently of labA and of sasA. One of three clock output pathways. Dephosphorylates phospho-RpaA, enhanced by KaiB and KaiC, has only modest kinase activity on RpaA. This chain is Circadian input-output histidine kinase CikA, found in Synechocystis sp. (strain ATCC 27184 / PCC 6803 / Kazusa).